The chain runs to 508 residues: Photosystem II CP47 reaction center protein (508 aa).

6 consecutive transmembrane segments (helical) span residues 21–36 (SVHIMHTALVAGWAGS), 101–115 (IMFSGLMFLAAIWHW), 140–156 (GIHLFLSGVACFGFGAF), 203–218 (IAAGILGILAGLFHLS), 237–252 (VLSSSIAAVFFAAFIV), and 457–472 (TFALLFFSGHIWHGAR).

It belongs to the PsbB/PsbC family. PsbB subfamily. As to quaternary structure, PSII is composed of 1 copy each of membrane proteins PsbA, PsbB, PsbC, PsbD, PsbE, PsbF, PsbH, PsbI, PsbJ, PsbK, PsbL, PsbM, PsbT, PsbX, PsbY, PsbZ, Psb30/Ycf12, at least 3 peripheral proteins of the oxygen-evolving complex and a large number of cofactors. It forms dimeric complexes. Binds multiple chlorophylls. PSII binds additional chlorophylls, carotenoids and specific lipids. is required as a cofactor.

It localises to the plastid. It is found in the chloroplast thylakoid membrane. In terms of biological role, one of the components of the core complex of photosystem II (PSII). It binds chlorophyll and helps catalyze the primary light-induced photochemical processes of PSII. PSII is a light-driven water:plastoquinone oxidoreductase, using light energy to abstract electrons from H(2)O, generating O(2) and a proton gradient subsequently used for ATP formation. In Pinus koraiensis (Korean pine), this protein is Photosystem II CP47 reaction center protein.